Reading from the N-terminus, the 212-residue chain is ATP phosphoribosyltransferase (212 aa).

The protein belongs to the ATP phosphoribosyltransferase family. Short subfamily. As to quaternary structure, heteromultimer composed of HisG and HisZ subunits.

The protein localises to the cytoplasm. It catalyses the reaction 1-(5-phospho-beta-D-ribosyl)-ATP + diphosphate = 5-phospho-alpha-D-ribose 1-diphosphate + ATP. Its pathway is amino-acid biosynthesis; L-histidine biosynthesis; L-histidine from 5-phospho-alpha-D-ribose 1-diphosphate: step 1/9. Functionally, catalyzes the condensation of ATP and 5-phosphoribose 1-diphosphate to form N'-(5'-phosphoribosyl)-ATP (PR-ATP). Has a crucial role in the pathway because the rate of histidine biosynthesis seems to be controlled primarily by regulation of HisG enzymatic activity. This is ATP phosphoribosyltransferase from Clostridium botulinum (strain ATCC 19397 / Type A).